We begin with the raw amino-acid sequence, 80 residues long: Protein CEBPZOS (80 aa).

Residues 15–32 (GVLVAELVGVFGAYFLFS) traverse the membrane as a helical segment.

Its subcellular location is the mitochondrion membrane. The sequence is that of Protein CEBPZOS from Homo sapiens (Human).